A 316-amino-acid polypeptide reads, in one-letter code: Transcription termination/antitermination protein NusG (316 aa).

This sequence belongs to the NusG family.

In terms of biological role, participates in transcription elongation, termination and antitermination. The polypeptide is Transcription termination/antitermination protein NusG (Mycoplasma genitalium (strain ATCC 33530 / DSM 19775 / NCTC 10195 / G37) (Mycoplasmoides genitalium)).